Consider the following 102-residue polypeptide: Cuticle protein AM/CP1114 (102 aa).

A Chitin-binding type R&amp;R domain is found at Asp16–Pro81. The span at Phe23–Lys33 shows a compositional bias: polar residues. The tract at residues Phe23 to Ser50 is disordered.

As to expression, arthrodial membrane and calcified shell.

The chain is Cuticle protein AM/CP1114 from Cancer pagurus (Rock crab).